The primary structure comprises 198 residues: Probable GTP-binding protein EngB (198 aa).

Residues 21–195 form the EngB-type G domain; sequence NFSEVAFLGR…EDIIINQTLG (175 aa). Residues 29 to 36, 56 to 60, 81 to 84, 151 to 154, and 174 to 176 contribute to the GTP site; these read GRSNVGKS, GKTQL, DLPG, TKCD, and VSN. Mg(2+) contacts are provided by serine 36 and threonine 58.

The protein belongs to the TRAFAC class TrmE-Era-EngA-EngB-Septin-like GTPase superfamily. EngB GTPase family. The cofactor is Mg(2+).

Its function is as follows. Necessary for normal cell division and for the maintenance of normal septation. This is Probable GTP-binding protein EngB from Campylobacter jejuni subsp. jejuni serotype O:23/36 (strain 81-176).